The sequence spans 724 residues: Protein-glutamine gamma-glutamyltransferase 5 (724 aa).

A2 is subject to N-acetylalanine. Residues C283, H342, and D365 contribute to the active site. Ca(2+) is bound by residues N405, D407, E453, and E458. Composition is skewed to polar residues over residues 473–486 and 495–505; these read RSQG…NPFS and ARSPDSPSLQP. The segment at 473 to 505 is disordered; it reads RSQGPHQANSNPFSSVPPRHNSARSPDSPSLQP.

Belongs to the transglutaminase superfamily. Transglutaminase family. It depends on Ca(2+) as a cofactor.

The protein resides in the cytoplasm. The enzyme catalyses L-glutaminyl-[protein] + L-lysyl-[protein] = [protein]-L-lysyl-N(6)-5-L-glutamyl-[protein] + NH4(+). In terms of biological role, catalyzes the cross-linking of proteins and the conjugation of polyamines to proteins. Contributes to the formation of the cornified cell envelope of keratinocytes. This is Protein-glutamine gamma-glutamyltransferase 5 (Tgm5) from Mus musculus (Mouse).